Consider the following 313-residue polypeptide: Ribosomal RNA small subunit methyltransferase H (313 aa).

S-adenosyl-L-methionine is bound by residues 35–37 (GGH), D55, F79, D100, and Q107.

The protein belongs to the methyltransferase superfamily. RsmH family.

Its subcellular location is the cytoplasm. The enzyme catalyses cytidine(1402) in 16S rRNA + S-adenosyl-L-methionine = N(4)-methylcytidine(1402) in 16S rRNA + S-adenosyl-L-homocysteine + H(+). Its function is as follows. Specifically methylates the N4 position of cytidine in position 1402 (C1402) of 16S rRNA. This Burkholderia multivorans (strain ATCC 17616 / 249) protein is Ribosomal RNA small subunit methyltransferase H.